The following is a 67-amino-acid chain: Systemic RNA interference defective protein 5 (67 aa).

Topologically, residues 1-18 (MPSKNCAKNLHACQWERD) are extracellular. A helical transmembrane segment spans residues 19–39 (IALVFLGLMVLFNIGQVVYMN). Over 40–67 (RARLYRLIRRGAEQIPADDEEPIIGIRD) the chain is Cytoplasmic.

As to expression, ubiquitously present in most tissues tested. Expressed in the somatic cells of intestine, muscle, neurons, somatic gonad and embryos but not in the germline (at protein level).

It localises to the late endosome membrane. In terms of biological role, plays a role in RNA-mediated gene silencing by mediating transport of both ingested and endogenous dsRNA between cells. Not required for the uptake of dsRNA from the intestinal lumen. This chain is Systemic RNA interference defective protein 5, found in Caenorhabditis elegans.